The primary structure comprises 525 residues: Transmembrane protein 184C (525 aa).

The next 7 helical transmembrane spans lie at 17 to 37, 48 to 68, 83 to 103, 121 to 141, 212 to 232, 254 to 274, and 287 to 307; these read LLVL…IWKF, SWFI…WGIL, IIRI…ALVY, VIYN…PNLI, YLVI…LLFY, VVFV…LGVI, and AVAT…AAIA. Disordered stretches follow at residues 358 to 394 and 483 to 525; these read PKKK…PSPG and LFPS…STDP. The segment covering 373–388 has biased composition (low complexity); it reads SSLLSSSSQDLTSGSS. The span at 483–502 shows a compositional bias: polar residues; sequence LFPSTETSENSMIDTSESQQ. The span at 503 to 525 shows a compositional bias: low complexity; it reads ESSDLCTESSDSSTESSDLSTDP.

The protein belongs to the TMEM184 family.

The protein localises to the membrane. Functionally, possible tumor suppressor which may play a role in cell growth. In Mus musculus (Mouse), this protein is Transmembrane protein 184C (Tmem184c).